The following is a 648-amino-acid chain: Fidgetin-like protein 2 (648 aa).

Residues 1–36 (MHWTPEHAQPLNQWPEQHLDVSSTTPSPAHKLELPP) are disordered. Positions 10-27 (PLNQWPEQHLDVSSTTPS) are enriched in polar residues. Residues A394 and 434–439 (GCGKAL) contribute to the ATP site.

It belongs to the AAA ATPase family. Mg(2+) is required as a cofactor.

Its subcellular location is the cytoplasm. The protein localises to the cell cortex. It catalyses the reaction ATP + H2O = ADP + phosphate + H(+). Microtubule-severing enzyme that negatively regulates cell migration and wound healing. In migrating cells, targets dynamic microtubules (MTs) at the leading edge and severs them, thereby suppressing motility. Microtubule severing releases ARHGEF2 which activates RHOA, which in turn regulates focal ahesion turnover via focal adhesion kinase, as opposed to F-actin polymerization, to suppress cell motility. Negative regulator of axon regeneration that suppresses axonal growth by selectively severing dynamic MTs in the distal axon shaft and growth cone. Contributes to proper cell branching during endothelial and neuronal development. The sequence is that of Fidgetin-like protein 2 (Fignl2) from Rattus norvegicus (Rat).